Here is a 664-residue protein sequence, read N- to C-terminus: tRNA uridine 5-carboxymethylaminomethyl modification enzyme MnmG (664 aa).

FAD is bound by residues 14-19, Val-126, and Ser-183; that span reads GGGHSG. 277–291 contacts NAD(+); that stretch reads GPRYCPSIEDKIDRF. An FAD-binding site is contributed by Gln-374.

This sequence belongs to the MnmG family. As to quaternary structure, homodimer. Heterotetramer of two MnmE and two MnmG subunits. FAD serves as cofactor.

The protein localises to the cytoplasm. NAD-binding protein involved in the addition of a carboxymethylaminomethyl (cmnm) group at the wobble position (U34) of certain tRNAs, forming tRNA-cmnm(5)s(2)U34. This is tRNA uridine 5-carboxymethylaminomethyl modification enzyme MnmG from Salinibacter ruber (strain DSM 13855 / M31).